The primary structure comprises 666 residues: Translation factor guf1, mitochondrial (666 aa).

A mitochondrion-targeting transit peptide spans 1-43; the sequence is MRGCLQLARWLRAAPKCPAASLLKPPSGLANPARFFTTSTACW. Positions 68 to 248 constitute a tr-type G domain; it reads DRYRNFCIVA…TVVEKIPAPV (181 aa). Residues 77 to 84, 141 to 145, and 195 to 198 each bind GTP; these read AHVDHGKS, DTPGH, and NKVD.

It belongs to the TRAFAC class translation factor GTPase superfamily. Classic translation factor GTPase family. LepA subfamily.

It is found in the mitochondrion inner membrane. The enzyme catalyses GTP + H2O = GDP + phosphate + H(+). In terms of biological role, promotes mitochondrial protein synthesis. May act as a fidelity factor of the translation reaction, by catalyzing a one-codon backward translocation of tRNAs on improperly translocated ribosomes. Binds to mitochondrial ribosomes in a GTP-dependent manner. This Aspergillus niger (strain ATCC MYA-4892 / CBS 513.88 / FGSC A1513) protein is Translation factor guf1, mitochondrial (guf1).